The primary structure comprises 367 residues: Biotin synthase (367 aa).

The 225-residue stretch at 67 to 291 folds into the Radical SAM core domain; that stretch reads NAVQISTLLS…IAVTRICCPS (225 aa). Cys-82, Cys-86, and Cys-89 together coordinate [4Fe-4S] cluster. Cys-128, Cys-159, Cys-219, and Arg-295 together coordinate [2Fe-2S] cluster.

This sequence belongs to the radical SAM superfamily. Biotin synthase family. Homodimer. Requires [4Fe-4S] cluster as cofactor. [2Fe-2S] cluster serves as cofactor.

It catalyses the reaction (4R,5S)-dethiobiotin + (sulfur carrier)-SH + 2 reduced [2Fe-2S]-[ferredoxin] + 2 S-adenosyl-L-methionine = (sulfur carrier)-H + biotin + 2 5'-deoxyadenosine + 2 L-methionine + 2 oxidized [2Fe-2S]-[ferredoxin]. Its pathway is cofactor biosynthesis; biotin biosynthesis; biotin from 7,8-diaminononanoate: step 2/2. Functionally, catalyzes the conversion of dethiobiotin (DTB) to biotin by the insertion of a sulfur atom into dethiobiotin via a radical-based mechanism. The chain is Biotin synthase from Psychrobacter sp. (strain PRwf-1).